An 88-amino-acid polypeptide reads, in one-letter code: Sm-like protein LSM5 (88 aa).

At Ala-2 the chain carries N-acetylalanine. Residues 9-84 (LPSELIDRCI…IAILVPGGSP (76 aa)) enclose the Sm domain.

Belongs to the snRNP Sm proteins family. As to quaternary structure, component of the heptameric LSM1-LSM7 complex that forms a seven-membered ring structure with a donut shape. The LSM subunits are arranged in the order LSM1, LSM2, LSM3, LSM6, LSM5, LSM7 and LSM4. Component of the heptameric LSM2-LSM8 complex that forms a seven-membered ring structure with a donut shape. The LSM subunits are arranged in the order LSM8, LSM2, LSM3, LSM6, LSM5, LSM7 and LSM4. LSM2 subunit interacts only with its two neighboring subunits, LSM6A or LSM6B and LSM7. In terms of tissue distribution, expressed in roots, leaves, stems, flowers and siliques.

Its subcellular location is the cytoplasm. The protein resides in the nucleus. Its function is as follows. Component of LSM protein complexes, which are involved in RNA processing. Component of the cytoplasmic LSM1-LSM7 complex which is involved in mRNA degradation by promoting decapping and leading to accurate 5'-3' mRNA decay. The cytoplasmic LSM1-LSM7 complex regulates developmental gene expression by the decapping of specific development-related transcripts. Component of the nuclear LSM2-LSM8 complex which is involved splicing nuclear mRNAs. LSM2-LSM8 binds directly to the U6 small nuclear RNAs (snRNAs) and is essential for accurate splicing of selected development-related mRNAs through the stabilization of the spliceosomal U6 snRNA. Plays a critical role in the regulation of development-related gene expression. Involved in the control of plant sensitivity to abscisic acid (ABA) and drought. Functions with ABH1 as negative regulator of ABA signaling in guard cells. Required for regulation of splicing efficiency of many stress-responsive genes under stress conditions. This is Sm-like protein LSM5 from Arabidopsis thaliana (Mouse-ear cress).